Here is a 673-residue protein sequence, read N- to C-terminus: MAFNLTSKYEPTGDQPAAIKQLVEGVERNDPAQVLLGVTGSGKTFTMANVIQQTQKPTLVLSHNKTLAAQLYGEFKQFFPENLVEYFISYYDYYQPEAFMPTSGLYIEKDLAINQEIEKLRLSATSSLMSGRRDIIVVASVSCIYGIGNPEEFRKSIVVLHKGQQINRNKLLYSFVEILYNRTTRDFTRGTFRVTGDTVDVYPAYADIAYRIQMWGDEVESIQMIEPETGKRISEQKSLTLFPANLFVTGKDSLNNAIHHIQDDLMKQVQLFEMEKRYGEAKRIQERTEFDIEMMRELGYCSGIENYSRYFDGRMPGQRPFCLIDYFPDDFLLVVDESHVTIPQIRAMFGGDRARKTNLVEYGFRLPSAMDNRPLTFDEFESINTQAIYVSATPADYELQRSEGAVVEQIIRPTGLLDPQIFIKPTVNQIDDLLDEIQERIEMGDRILVTTLTKRMAEELTKFLDGVGVRTRYIHSEVKTLDRVEILRELRLGVFDVLVGVNLLREGLDLPEVSLVAIMDADKEGFLRNVRSLVQTIGRAARNSNGKVIMYADKITASMQQAIDETSRRRATQLAYNELHGITPITVNKSKDEIMGQTKVADSNKFNKQYIEPEGEPSLAADPVVAMLNKTELTKMIDRAKKDMDKAAKDLDFVEAARYRDEMFALQKIIDSK.

Residues 24-182 (EGVERNDPAQ…YSFVEILYNR (159 aa)) enclose the Helicase ATP-binding domain. 37–44 (GVTGSGKT) contacts ATP. A Beta-hairpin motif is present at residues 90–113 (YYDYYQPEAFMPTSGLYIEKDLAI). The Helicase C-terminal domain maps to 429 to 591 (QIDDLLDEIQ…ITPITVNKSK (163 aa)). One can recognise a UVR domain in the interval 634–669 (TKMIDRAKKDMDKAAKDLDFVEAARYRDEMFALQKI).

It belongs to the UvrB family. Forms a heterotetramer with UvrA during the search for lesions. Interacts with UvrC in an incision complex.

The protein localises to the cytoplasm. Its function is as follows. The UvrABC repair system catalyzes the recognition and processing of DNA lesions. A damage recognition complex composed of 2 UvrA and 2 UvrB subunits scans DNA for abnormalities. Upon binding of the UvrA(2)B(2) complex to a putative damaged site, the DNA wraps around one UvrB monomer. DNA wrap is dependent on ATP binding by UvrB and probably causes local melting of the DNA helix, facilitating insertion of UvrB beta-hairpin between the DNA strands. Then UvrB probes one DNA strand for the presence of a lesion. If a lesion is found the UvrA subunits dissociate and the UvrB-DNA preincision complex is formed. This complex is subsequently bound by UvrC and the second UvrB is released. If no lesion is found, the DNA wraps around the other UvrB subunit that will check the other stand for damage. The chain is UvrABC system protein B from Cytophaga hutchinsonii (strain ATCC 33406 / DSM 1761 / CIP 103989 / NBRC 15051 / NCIMB 9469 / D465).